Consider the following 742-residue polypeptide: 5-methyltetrahydropteroyltriglutamate--homocysteine methyltransferase (742 aa).

5-methyltetrahydropteroyltri-L-glutamate-binding positions include 18–21 and Lys-112; that span reads REWK. Residues 420–422 and Glu-473 each bind L-homocysteine; that span reads IGS. Residues 420–422 and Glu-473 each bind L-methionine; that span reads IGS. 5-methyltetrahydropteroyltri-L-glutamate is bound at residue Trp-550. Asp-588 is an L-homocysteine binding site. Asp-588 lines the L-methionine pocket. 5-methyltetrahydropteroyltri-L-glutamate is bound at residue Glu-594. The Zn(2+) site is built by His-630, Cys-632, and Glu-654. His-683 serves as the catalytic Proton donor. Cys-715 is a binding site for Zn(2+).

It belongs to the vitamin-B12 independent methionine synthase family. The cofactor is Zn(2+).

It catalyses the reaction 5-methyltetrahydropteroyltri-L-glutamate + L-homocysteine = tetrahydropteroyltri-L-glutamate + L-methionine. It participates in amino-acid biosynthesis; L-methionine biosynthesis via de novo pathway; L-methionine from L-homocysteine (MetE route): step 1/1. Its function is as follows. Catalyzes the transfer of a methyl group from 5-methyltetrahydrofolate to homocysteine resulting in methionine formation. The protein is 5-methyltetrahydropteroyltriglutamate--homocysteine methyltransferase of Staphylococcus aureus (strain MRSA252).